We begin with the raw amino-acid sequence, 2346 residues long: Nucleoprotein TPR (2346 aa).

Coiled coils occupy residues Asp38–Ile190, Gln217–Ser366, Tyr395–Val493, and Lys565–Val596. Positions Val622–Ser649 are disordered. The segment covering Leu629–Pro642 has biased composition (polar residues). Coiled-coil stretches lie at residues Ala643–Leu1158 and Glu1196–Asn1247. Positions Leu1187 to Met1655 are interacts with Mad1. 4 positions are modified to phosphothreonine: Thr1259, Thr1302, Thr1338, and Thr1390. 2 coiled-coil regions span residues Thr1281–Glu1536 and Ser1579–Gln1627. Polar residues-rich tracts occupy residues Arg1621 to Thr1649 and Gly1657 to Val1667. Disordered regions lie at residues Arg1621 to Leu1677, Pro1695 to Ser1768, and Ser1821 to Pro2346. Positions Ala1702–Ala1722 are enriched in low complexity. Residues Pro1738 to Ser1747 show a composition bias toward polar residues. Composition is skewed to low complexity over residues Ser1752 to Ser1761 and Ser1827 to Ser1878. Residues Asn1879–Gly1891 show a composition bias toward polar residues. Residues Gln1953 to Val2023 show a composition bias toward acidic residues. A compositionally biased stretch (polar residues) spans Met2028 to Lys2080. Residues Ala2082–Ala2091 are compositionally biased toward low complexity. 2 stretches are compositionally biased toward polar residues: residues Ser2097 to Cys2110 and Gly2142 to Ser2159. Positions Lys2165–Asp2184 are enriched in basic and acidic residues. Composition is skewed to polar residues over residues Ala2193–Asn2223 and Arg2302–Ala2322. The span at Gln2323 to Arg2332 shows a compositional bias: basic residues.

It belongs to the TPR family. In terms of assembly, part of the nuclear pore complex (NPC). Associates with male-specific lethal (MSL) histone acetyltransferase complex. Interacts with Mad2; the interaction is required for efficient recruitment of Mad2 to unattached kinetochore and occurs in a microtubule-independent manner. Interacts with Mad1 (N-terminus). Interacts with Chro, east and Asator; the interaction is part of a macromolecular complex forming the spindle matrix during mitosis. Interacts with Nup98. In males, interacts with histone acetyltransferase mof. Post-translationally, mps1-mediated phosphorylation disrupts interaction with Mad1 during mitosis. As to expression, expressed in salivary glands, fat body, tracheal tube, esophageal tube and anterior ejaculatory duct (at protein level).

The protein resides in the nucleus. It localises to the nucleus matrix. It is found in the nucleus lamina. The protein localises to the nucleus envelope. Its subcellular location is the nucleus membrane. The protein resides in the nuclear pore complex. It localises to the cytoplasm. It is found in the cytoskeleton. The protein localises to the spindle. Its subcellular location is the chromosome. The protein resides in the centromere. It localises to the kinetochore. It is found in the midbody. Component of the nuclear pore complex (NPC), a complex required for the trafficking across the nuclear envelope. Functions as a scaffolding element in the nuclear phase of the NPC. Plays a role in chromosomal organization and gene expression regulation; stimulates transcription by promoting the formation of an open chromatin environment. Binds chromatin to nucleoporin-associated regions (NARs) that define transcriptionally active regions of the genome. Associates with extended chromosomal regions that alternate between domains of high density binding with those of low occupancy. Preferentially binds to NARs of the male X chromosome. In males, together with Nup153, required for the localization of the male-specific lethal (MSL) histone acetyltransferase complex to the X chromosome and therefore for the transcription of dosage compensation genes. In males, restrains dosage-compensated expression at the level of nascent transcription probably by interacting with the MSL complex and by modulating RNA Polymerase II phosphorylation status and activity. During mitosis forms a gel-like spindle matrix complex together with Skeletor (Skel), Chro, east, and Asator embedding the microtubule spindle apparatus. During interphase localizes Mad1 to the nuclear pore complex and thereby might act as a scaffold to assemble the Mad1-C-Mad2 complex, a heterotetramer that catalyzes the structural conversion of open-Mad2 (O-Mad2) into closed-Mad2 (C-Mad2) which is essential for spindle-assembly checkpoint (SAC). During the metaphase-anaphase transition and before chromosome congression, is phosphorylated by Msp-1; this modification releases Mad1 from the nuclear pore complex and thereby promotes assembly of SAC ensuring a timely and effective recruitment of spindle checkpoint proteins like Mad1, Mad2 and Mps1 to unattached kinetochores (KT). In testes, has a role in stem cell asymmetric division and maintenance via regulation of mitotic spindle assembly checkpoint (SAC) complex. This chain is Nucleoprotein TPR, found in Drosophila melanogaster (Fruit fly).